Here is a 506-residue protein sequence, read N- to C-terminus: UBX domain-containing protein 4 (506 aa).

The tract at residues 1-199 (MLWFQGAIPA…PAEDLTVRVE (199 aa)) is interaction with UBQLN1. At 1–411 (MLWFQGAIPA…VHSSSGDIWT (411 aa)) the chain is on the cytoplasmic side. The disordered stretch occupies residues 110–194 (QQMHSSKGEA…CSNQRPAEDL (85 aa)). Composition is skewed to polar residues over residues 120–136 (SVTN…TPSA) and 153–167 (LCET…SDTA). Residues 313–391 (DRSTIARIQF…ELAPSASVVL (79 aa)) form the UBX domain. An intramembrane segment occupies 412–432 (LLGTVLYPFLAIWRLISNFLF). The Cytoplasmic portion of the chain corresponds to 433 to 506 (SNPPPAQTSA…TWNGNSTQQM (74 aa)). The disordered stretch occupies residues 437–506 (PAQTSARATS…TWNGNSTQQM (70 aa)). A compositionally biased stretch (low complexity) spans 444–456 (ATSTEPSNSASSS). Basic and acidic residues predominate over residues 457-489 (KSEKREPVRKRMLEKRGEDFKKEGKIYRLRTQD). Residue threonine 487 is modified to Phosphothreonine. The segment covering 496–506 (NTWNGNSTQQM) has biased composition (polar residues).

Directly interacts with VCP. Interacts with UBQLN1. Forms a complex with VCP and UBQLN1. Expressed in many tissues, including brain, heart, kidney, liver, muscle and spleen (at protein level).

It is found in the endoplasmic reticulum membrane. The protein localises to the nucleus envelope. In terms of biological role, involved in endoplasmic reticulum-associated protein degradation (ERAD). Acts as a platform to recruit both UBQLN1 and VCP to the ER during ERAD. The sequence is that of UBX domain-containing protein 4 (Ubxn4) from Mus musculus (Mouse).